Here is a 397-residue protein sequence, read N- to C-terminus: MGCLGNSKTEDQRNEEKAQREANKKIEKQLQKDKQVYRATHRLLLLGAGESGKSTIVKQMRILHVNGFNGDEKATKVQDIKNNLKEAIETIVAAMSNLVPPVELANPENQFRVDYILSVMNVPDFDFPPEFYEHAKALWEDEGVRACYERSNEYQLIDCAQYFLDKIDVIKQDDYVPSDQDLLRCRVLTSGIFETKFQVDKVNFHMFDVGGQRDERRKWIQCFNDVTAIIFVVASSSYNMVIREDNQTNRLQEALNLFKSIWNNRWLRTISVILFLNKQDLLAEKVLAGKSKIELFVLDDRLFQERPFSFIEDYFPEFARYTTPEDATPEPGEDPRVTRAKYFIRDEFLRISTASGDGRHYCYPHFTCAVDTENIRRVFNDCRDIIQRMHLRQYELL.

The disordered stretch occupies residues 1 to 23 (MGCLGNSKTEDQRNEEKAQREAN). The N-palmitoyl glycine moiety is linked to residue Gly-2. The S-palmitoyl cysteine moiety is linked to residue Cys-3. Residues 8-23 (KTEDQRNEEKAQREAN) are compositionally biased toward basic and acidic residues. The G-alpha domain occupies 39-397 (ATHRLLLLGA…RMHLRQYELL (359 aa)). A G1 motif region spans residues 42-55 (RLLLLGAGESGKST). GTP is bound by residues 47 to 55 (GAGESGKST), 182 to 189 (LLRCRVLT), 208 to 212 (DVGGQ), 277 to 280 (NKQD), and Ala-369. Mg(2+) contacts are provided by Ser-54 and Thr-189. The tract at residues 181 to 189 (DLLRCRVLT) is G2 motif. Positions 204-213 (FHMFDVGGQR) are G3 motif. Positions 273–280 (ILFLNKQD) are G4 motif. The tract at residues 367–372 (TCAVDT) is G5 motif.

Belongs to the G-alpha family. G(s) subfamily. As to quaternary structure, heterotrimeric G proteins are composed of 3 units; alpha, beta and gamma. The alpha chain contains the guanine nucleotide binding site. Interacts with CRY1; the interaction may block GPCR-mediated regulation of cAMP concentrations. Interacts with ADCY6 and stimulates its adenylyl cyclase activity. Interacts with ADCY2 and ADCY5. Stimulates the ADCY5 adenylyl cyclase activity. Interaction with SASH1.

Its subcellular location is the cell membrane. Guanine nucleotide-binding proteins (G proteins) function as transducers in numerous signaling pathways controlled by G protein-coupled receptors (GPCRs). Signaling involves the activation of adenylyl cyclases, resulting in increased levels of the signaling molecule cAMP. GNAS functions downstream of several GPCRs, including beta-adrenergic receptors. Stimulates the Ras signaling pathway via RAPGEF2. This chain is Guanine nucleotide-binding protein G(s) subunit alpha (GNAS), found in Sus scrofa (Pig).